The sequence spans 89 residues: Small ribosomal subunit protein uS15 (89 aa).

It belongs to the universal ribosomal protein uS15 family. Part of the 30S ribosomal subunit. Forms a bridge to the 50S subunit in the 70S ribosome, contacting the 23S rRNA.

In terms of biological role, one of the primary rRNA binding proteins, it binds directly to 16S rRNA where it helps nucleate assembly of the platform of the 30S subunit by binding and bridging several RNA helices of the 16S rRNA. Forms an intersubunit bridge (bridge B4) with the 23S rRNA of the 50S subunit in the ribosome. In Lactiplantibacillus plantarum (strain ATCC BAA-793 / NCIMB 8826 / WCFS1) (Lactobacillus plantarum), this protein is Small ribosomal subunit protein uS15.